The chain runs to 334 residues: Glucosyltransferase 3 (334 aa).

UDP contacts are provided by residues T16, R179, and 249–254 (SHKSAT).

The protein belongs to the Gtf3 glucosyltransferase family. Homotetramer; a dimer of dimers.

Its pathway is protein modification; protein glycosylation. Required for polymorphic O-glycosylation of the serine-rich repeat protein in this bacteria. Catalyzes the second step in glycosylation by transferring glucose from UDP-glucose to the terminal GlcNAc moiety of the 3-O-(N-acetyl-alpha-D-glucosaminyl)-L-seryl-[protein] resulting from the first glycosylation step. Functionally, part of the accessory SecA2/SecY2 system specifically required to export GspB, a serine-rich repeat cell wall protein encoded upstream in the same operon. The chain is Glucosyltransferase 3 from Streptococcus gordonii.